Here is a 357-residue protein sequence, read N- to C-terminus: Peptide chain release factor 1 (357 aa).

Position 236 is an N5-methylglutamine (Gln236).

This sequence belongs to the prokaryotic/mitochondrial release factor family. Methylated by PrmC. Methylation increases the termination efficiency of RF1.

It localises to the cytoplasm. Functionally, peptide chain release factor 1 directs the termination of translation in response to the peptide chain termination codons UAG and UAA. This Mycobacterium avium (strain 104) protein is Peptide chain release factor 1.